We begin with the raw amino-acid sequence, 902 residues long: 4-hydroxyphenylacetate decarboxylase glycyl radical subunit (902 aa).

Positions 38-774 (KRAEDLLDVY…ATLATPDGRL (737 aa)) constitute a PFL domain. 4-hydroxyphenylacetate is bound by residues Ser-348 and Cys-507. The active-site Cysteine radical intermediate is Cys-507. Residue Glu-509 is the Proton donor of the active site. Residues His-540 and Glu-641 each contribute to the 4-hydroxyphenylacetate site. Residues 782–902 (GSVSAYAGTD…VIARTEYEGV (121 aa)) enclose the Glycine radical domain. Gly-877 carries the post-translational modification Glycine radical.

Belongs to the glycyl radical enzyme (GRE) family. HPAD subfamily. Heterooctamer consisting of 4 large (HpdB) subunits and 4 small (HpdC) subunits, arranged as a tetramer of heterodimers. Also forms a catalytically inactive homodimer. In terms of processing, requires the activating protein CsdA to generate the key active site glycyl radical that is involved in catalysis. Post-translationally, phosphorylated on serine. Phosphorylation may trigger the formation of the active heterooctamers and thereby regulates enzyme activity.

The catalysed reaction is 4-hydroxyphenylacetate + H(+) = 4-methylphenol + CO2. It catalyses the reaction 3,4-dihydroxyphenylacetate + H(+) = 4-methylcatechol + CO2. In terms of biological role, glycyl radical subunit of the HPA decarboxylase that decarboxylates phenylacetates with a hydroxyl group in the p-position. Active toward 4-hydroxyphenylacetate and 3,4-dihydroxyphenylacetate, forming 4-methylphenol and 4-methylcatechol, respectively. Is likely involved in the catabolism of aromatic amino acids such as tyrosine fermentation. 4-methylphenol (p-cresol) formation provides metabolic toxicity, which allows an active suppression of other microbes and may provide growth advantages for the producers in highly competitive environments. The large subunit is the catalytic subunit that binds the substrate. This chain is 4-hydroxyphenylacetate decarboxylase glycyl radical subunit, found in Clostridioides difficile (strain CD196) (Peptoclostridium difficile).